We begin with the raw amino-acid sequence, 379 residues long: MSVRLADVIDVLDQAYPPRLAQSWDSVGLVCGDPDDVVDSVTVAVDATPAVVDQVPQAGLLLVHHPLLLRGVDTVAANTPKGVLVHRLIRTGRSLFTAHTNADSASPGVSDALAHAVGLTVDAVLDPVPGAADLDKWVIYVPRENSEAVRAAVFEAGAGHIGDYSHCSWSVAGTGQFLAHDGASPAIGSVGTVERVAEDRVEVVAPARARAEVLAAMRAAHPYEEPAFDIFALVPPPVGSGLGRIGRLPKPEPLRTFVARLEAALPPTATGVRAAGDPDLLVSRVAVCGGAGDSLLATVAAADVQAYVTADLRHHPADEHCRASQVALIDVAHWASEFPWCGQAAEVLRSHFGASLPVRVCTICTDPWNLDHETGRDQA.

5 residues coordinate a divalent metal cation: His64, His65, Asp103, His333, and Glu337.

Belongs to the GTP cyclohydrolase I type 2/NIF3 family. In terms of assembly, homohexamer.

The protein is GTP cyclohydrolase 1 type 2 homolog of Mycobacterium bovis (strain ATCC BAA-935 / AF2122/97).